We begin with the raw amino-acid sequence, 556 residues long: Oxygen-dependent choline dehydrogenase (556 aa).

6–35 (DYIIIGAGSAGNVLAARLTEDPGVSVLLLE) is an FAD binding site. Residue H475 is the Proton acceptor of the active site.

It belongs to the GMC oxidoreductase family. It depends on FAD as a cofactor.

It catalyses the reaction choline + A = betaine aldehyde + AH2. The enzyme catalyses betaine aldehyde + NAD(+) + H2O = glycine betaine + NADH + 2 H(+). It functions in the pathway amine and polyamine biosynthesis; betaine biosynthesis via choline pathway; betaine aldehyde from choline (cytochrome c reductase route): step 1/1. Its function is as follows. Involved in the biosynthesis of the osmoprotectant glycine betaine. Catalyzes the oxidation of choline to betaine aldehyde and betaine aldehyde to glycine betaine at the same rate. The sequence is that of Oxygen-dependent choline dehydrogenase from Xanthomonas campestris pv. campestris (strain 8004).